A 309-amino-acid polypeptide reads, in one-letter code: Probable 4-hydroxy-2-oxoglutarate aldolase, mitochondrial (309 aa).

49 to 50 (SN) lines the substrate pocket. K173 serves as the catalytic Schiff-base intermediate with substrate.

It belongs to the DapA family.

The enzyme catalyses (4S)-4-hydroxy-2-oxoglutarate = glyoxylate + pyruvate. It carries out the reaction (4R)-4-hydroxy-2-oxoglutarate = glyoxylate + pyruvate. Inhibited by divalent cations. Catalyzes the final step in the metabolic pathway of hydroxyproline. Involved in osmoadaptation. The chain is Probable 4-hydroxy-2-oxoglutarate aldolase, mitochondrial from Emericella nidulans (strain FGSC A4 / ATCC 38163 / CBS 112.46 / NRRL 194 / M139) (Aspergillus nidulans).